The chain runs to 1451 residues: ARF guanine-nucleotide exchange factor GNOM (1451 aa).

A DCB domain region spans residues 1-246 (MGRLKLHSGI…VNRAGSIKQE (246 aa)). The SEC7 domain occupies 557–752 (RRKYIKRRLM…NEIRTTPEQG (196 aa)). Glu-658 is a catalytic residue. The tract at residues 1430–1451 (SQLGDDETVSNGLSSPENTTGS) is disordered.

In terms of assembly, homodimer. Interacts with CYP19-4/CYP5 in vitro. As to expression, stems, leaves, flowers, siliques, floral inflorescence and roots. Expressed in the whole plant (at the protein level).

Its subcellular location is the cytoplasm. The protein localises to the cytosol. It is found in the endosome membrane. It localises to the cell membrane. Its activity is regulated as follows. Inhibited by brefeldin A (BFA). Its function is as follows. Activates the ARF proteins by exchanging bound GDP for free GTP. Plays a role in vesicular protein sorting. Acts as the major regulator of endosomal vesicle trafficking but is also involved in the endocytosis process. Could function redundantly with GNL1 in the retrograde Golgi to endoplasmic reticulum trafficking. Regulates vesicle trafficking required for the coordinated polar localization of auxin efflux carriers which in turn determines the direction of auxin flow. Mediates the sorting of PIN1 from endosomal compartments to the basal plasma membrane and the polarization of PIN3 to the bottom side of hypocotyl endodermal cells. Involved in the specification of apical-basal pattern formation in the early embryo and during root formation. Required for correct cell wall organization leading to normal cell adhesion during seedling development. Also plays an essential role in hydrotropism of seedling roots. The chain is ARF guanine-nucleotide exchange factor GNOM (GN) from Arabidopsis thaliana (Mouse-ear cress).